A 293-amino-acid polypeptide reads, in one-letter code: Ribosomal protein L11 methyltransferase (293 aa).

S-adenosyl-L-methionine is bound by residues Thr145, Gly166, Asp188, and Asn230.

This sequence belongs to the methyltransferase superfamily. PrmA family.

Its subcellular location is the cytoplasm. It catalyses the reaction L-lysyl-[protein] + 3 S-adenosyl-L-methionine = N(6),N(6),N(6)-trimethyl-L-lysyl-[protein] + 3 S-adenosyl-L-homocysteine + 3 H(+). In terms of biological role, methylates ribosomal protein L11. This chain is Ribosomal protein L11 methyltransferase, found in Actinobacillus pleuropneumoniae serotype 3 (strain JL03).